Reading from the N-terminus, the 324-residue chain is MLEKIVENRHLSFEEAYDLFNILKEESEVRIAAYLAALQTKGYTSEEIAGFAKAMRDNAIKLDLGEVLDTAGTGGDKSFTINVSTASALILSEYTKVAKHGNVSVTSRSGSANLLEALGINIKISPEKAKEMIEKVNFTFIFAPMYHPALKRIMPVRKELGIKTIFNILGPLANPANPAYQVVGVNSRDLVEKMARALNYLGVKRATVVHGSGLDEISPEKETIVAEVNRGDIDFYTVTPEDFGLARTKVIPCYSPEESAERIRAVLRGNGKNEDRNFVLINSAMALYTIGIASDLKEGVELAENVLGEKIIKKLEEIACLSKS.

5-phospho-alpha-D-ribose 1-diphosphate-binding positions include G72, 75–76 (GD), T80, 82–85 (NVST), 99–107 (KHGNVSVTS), and S111. G72 contacts anthranilate. S84 contributes to the Mg(2+) binding site. Residue N102 participates in anthranilate binding. Residue R157 coordinates anthranilate. The Mg(2+) site is built by D215 and E216.

The protein belongs to the anthranilate phosphoribosyltransferase family. In terms of assembly, homodimer. It depends on Mg(2+) as a cofactor.

The catalysed reaction is N-(5-phospho-beta-D-ribosyl)anthranilate + diphosphate = 5-phospho-alpha-D-ribose 1-diphosphate + anthranilate. The protein operates within amino-acid biosynthesis; L-tryptophan biosynthesis; L-tryptophan from chorismate: step 2/5. Catalyzes the transfer of the phosphoribosyl group of 5-phosphorylribose-1-pyrophosphate (PRPP) to anthranilate to yield N-(5'-phosphoribosyl)-anthranilate (PRA). This is Anthranilate phosphoribosyltransferase from Pyrococcus furiosus (strain ATCC 43587 / DSM 3638 / JCM 8422 / Vc1).